We begin with the raw amino-acid sequence, 404 residues long: MKIIAKIPAWMLLCLFTLSPITETIYTSGLPSITEYFNTDGSTTQITSSLYYLGFALGILTLGRLSDIYGRRPVVLFGLCIYAISSIISIFAPNIETLMLARFVQAFGVSVGSVIGQAMARDSYQGSELSYVYASLSPWLLFIPSLGSSIGGYIIEYSSWHYTFVFFSLTGTVLLTLYCKILPETNPYINFSQTSKYFEVLKVVIRDKSLWLYAFIIGAFNGIYYGFYIEAPFIFIDKMKVAPSFYGKLAFLLSFAGIFGGFLGGYLIKKRHIHDQKVMILGLVFSVIGCSLLAIDALILQDKEVGQNIAVIMMFAPMMLHMVGHNLLIPMTLRYALEDYAKVTGTAGSVFGAIYYVLIAAVTFLVSKLHSDTIGNFALLFLVLSVSSAAAFYYILILYKKKLT.

The next 12 membrane-spanning stretches (helical) occupy residues 3 to 23, 43 to 63, 73 to 93, 95 to 115, 135 to 155, 162 to 182, 216 to 236, 248 to 268, 280 to 300, 309 to 329, 346 to 366, and 377 to 397; these read IIAK…PITE, TTQI…LTLG, PVVL…IFAP, IETL…GSVI, SLSP…GYII, YTFV…CKIL, IIGA…FIFI, KLAF…GYLI, ILGL…ALIL, IAVI…NLLI, TAGS…TFLV, and FALL…YILI.

It belongs to the major facilitator superfamily. Bcr/CmlA family.

It localises to the cell inner membrane. This is an uncharacterized protein from Rickettsia bellii (strain RML369-C).